The following is an 892-amino-acid chain: Translation initiation factor IF-2 (892 aa).

Residues 165-175 are compositionally biased toward basic and acidic residues; sequence EEQAELERQKT. 2 disordered regions span residues 165 to 250 and 264 to 300; these read EEQA…EDDS and ERAR…AHGF. Low complexity predominate over residues 208–222; it reads PRAVRPAPAARPSVS. Residues 391 to 560 form the tr-type G domain; the sequence is PRPPVVTIMG…SIQAEVLELK (170 aa). GTP is bound by residues 400–407, 446–450, and 500–503; these read GHVDHGKT, DTPGH, and SKID.

It belongs to the TRAFAC class translation factor GTPase superfamily. Classic translation factor GTPase family. IF-2 subfamily.

The protein localises to the cytoplasm. In terms of biological role, one of the essential components for the initiation of protein synthesis. Protects formylmethionyl-tRNA from spontaneous hydrolysis and promotes its binding to the 30S ribosomal subunits. Also involved in the hydrolysis of GTP during the formation of the 70S ribosomal complex. In Xylella fastidiosa (strain 9a5c), this protein is Translation initiation factor IF-2.